Consider the following 255-residue polypeptide: Putative glycyl-radical enzyme activating enzyme MJ1632 (255 aa).

The 216-residue stretch at 30–245 (SHISLSDKIT…SNVSCSLDFK (216 aa)) folds into the Radical SAM core domain. Residues C45, C49, and C52 each contribute to the [4Fe-4S] cluster site. S-adenosyl-L-methionine is bound by residues 51–53 (YCF), G88, and 134–136 (DLK).

Belongs to the organic radical-activating enzymes family. The cofactor is [4Fe-4S] cluster.

The catalysed reaction is glycyl-[protein] + reduced [flavodoxin] + S-adenosyl-L-methionine = glycin-2-yl radical-[protein] + semiquinone [flavodoxin] + 5'-deoxyadenosine + L-methionine + H(+). The polypeptide is Putative glycyl-radical enzyme activating enzyme MJ1632 (Methanocaldococcus jannaschii (strain ATCC 43067 / DSM 2661 / JAL-1 / JCM 10045 / NBRC 100440) (Methanococcus jannaschii)).